We begin with the raw amino-acid sequence, 141 residues long: Hemoglobin subunit alpha (141 aa).

Residues 1–141 (VLSPADKKNV…VSTVLTSKYR (141 aa)) enclose the Globin domain. S3 bears the Phosphoserine mark. Residues K7 and K11 each carry the N6-succinyllysine modification. K16 carries the post-translational modification N6-acetyllysine; alternate. K16 carries the post-translational modification N6-succinyllysine; alternate. Y24 carries the phosphotyrosine modification. Phosphoserine is present on S35. K40 is subject to N6-succinyllysine. S49 is modified (phosphoserine). H58 contacts O2. Position 87 (H87) interacts with heme b. S102 bears the Phosphoserine mark. T108 bears the Phosphothreonine mark. Phosphoserine occurs at positions 124 and 131. Phosphothreonine is present on residues T134 and T137. At S138 the chain carries Phosphoserine.

It belongs to the globin family. Heterotetramer of two alpha chains and two beta chains. In terms of tissue distribution, red blood cells.

Functionally, involved in oxygen transport from the lung to the various peripheral tissues. Hemopressin acts as an antagonist peptide of the cannabinoid receptor CNR1. Hemopressin-binding efficiently blocks cannabinoid receptor CNR1 and subsequent signaling. In Spermophilus citellus (European ground squirrel), this protein is Hemoglobin subunit alpha (HBA).